A 172-amino-acid chain; its full sequence is Protein-export protein SecB (172 aa).

Belongs to the SecB family. Homotetramer, a dimer of dimers. One homotetramer interacts with 1 SecA dimer.

It is found in the cytoplasm. In terms of biological role, one of the proteins required for the normal export of preproteins out of the cell cytoplasm. It is a molecular chaperone that binds to a subset of precursor proteins, maintaining them in a translocation-competent state. It also specifically binds to its receptor SecA. The protein is Protein-export protein SecB of Ralstonia pickettii (strain 12J).